The chain runs to 103 residues: Large ribosomal subunit protein bL21 (103 aa).

Belongs to the bacterial ribosomal protein bL21 family. Part of the 50S ribosomal subunit. Contacts protein L20.

Its function is as follows. This protein binds to 23S rRNA in the presence of protein L20. This is Large ribosomal subunit protein bL21 from Haemophilus influenzae (strain 86-028NP).